We begin with the raw amino-acid sequence, 951 residues long: Kinase suppressor of Ras 2 (951 aa).

The interval 237–298 is disordered; it reads PPPPPLESGH…PGTPPPSSRK (62 aa). The segment covering 260 to 274 has biased composition (low complexity); sequence RTPPRTPNIVTTVTP. Thr273 and Thr277 each carry phosphothreonine. Residues 413–457 form a Phorbol-ester/DAG-type zinc finger; sequence KHRFSTKYWMSQTCTVCGKGMLFGLKCKNCKLKCHNKCTKEAPPC. Zn(2+) is bound by residues His414, Cys426, Cys429, Cys439, Cys442, His447, Cys450, and Cys457. Ser475 is subject to Phosphoserine; by MARK3. 2 disordered regions span residues 489 to 559 and 614 to 634; these read RYSD…QKKN and EPTS…DEFE. Positions 494 to 503 are enriched in polar residues; that stretch reads HISQTLPKTN. Position 498 is a phosphothreonine (Thr498). A compositionally biased stretch (low complexity) spans 518-531; the sequence is SSSNPSSTTSSTPS. The span at 532–552 shows a compositional bias: pro residues; it reads SPAPPLPPSATPPSPLHPSPQ. The 266-residue stretch at 667 to 932 folds into the Protein kinase domain; that stretch reads LEIGELIGKG…TKLMDMLEKL (266 aa). 673 to 681 contacts ATP; it reads IGKGRFGQV. The active-site Proton donor/acceptor is the Asp787. 2 residues coordinate ATP: Lys789 and Asp804.

This sequence belongs to the protein kinase superfamily. TKL Ser/Thr protein kinase family. In terms of assembly, heterodimerizes (via N-terminus) with BRAF (via N-terminus) in a MAP2K1/MEK1-dependent manner. Interacts with BRAF; this increases the low intrinsic protein kinase activity of KSR2. Interacts with MAP2K1, forming a heterodimer that can dimerize to form a heterotetramer. Interacts with MAP3K8, MAPK, RAS and RAF. In terms of processing, phosphorylated on Ser-475 by MARK3.

The protein localises to the cytoplasm. Its subcellular location is the membrane. It carries out the reaction L-seryl-[protein] + ATP = O-phospho-L-seryl-[protein] + ADP + H(+). The enzyme catalyses L-threonyl-[protein] + ATP = O-phospho-L-threonyl-[protein] + ADP + H(+). Its function is as follows. Location-regulated scaffold connecting MEK to RAF. Has very low protein kinase activity and can phosphorylate MAP2K1 at several Ser and Thr residues with very low efficiency (in vitro). Acts as MAP2K1/MEK1-dependent allosteric activator of BRAF; upon binding to MAP2K1/MEK1, dimerizes with BRAF and promotes BRAF-mediated phosphorylation of MAP2K1/MEK1. Interaction with BRAF enhances KSR2-mediated phosphorylation of MAP2K1 (in vitro). Blocks MAP3K8 kinase activity and MAP3K8-mediated signaling. Acts as a negative regulator of MAP3K3-mediated activation of ERK, JNK and NF-kappa-B pathways, inhibiting MAP3K3-mediated interleukin-8 production. The chain is Kinase suppressor of Ras 2 from Mus musculus (Mouse).